The sequence spans 302 residues: ATP synthase mitochondrial F1 complex assembly factor 1 (302 aa).

The protein belongs to the ATP11 family. Interacts with ATP5F1B; involved in the assembly of the F1 component of the mitochondrial ATP synthase (ATPase).

It is found in the mitochondrion inner membrane. Its function is as follows. Has a complex stabilizing activity in the assembly of the mitochondrial F1-F0 complex. This chain is ATP synthase mitochondrial F1 complex assembly factor 1 (atpaf1), found in Danio rerio (Zebrafish).